Reading from the N-terminus, the 552-residue chain is Amino-acid acetyltransferase, mitochondrial (552 aa).

The transit peptide at 1–32 (MIKTWIRCLTTEVRYHQPNAHGRSLVMSVLNS) directs the protein to the mitochondrion. The region spanning 379-545 (QTGKSDPVSK…LRDYAKYVRD (167 aa)) is the N-acetyltransferase domain.

It belongs to the acetyltransferase family.

The protein localises to the mitochondrion. The enzyme catalyses L-glutamate + acetyl-CoA = N-acetyl-L-glutamate + CoA + H(+). Its pathway is amino-acid biosynthesis; L-arginine biosynthesis; N(2)-acetyl-L-ornithine from L-glutamate: step 1/4. N-acetylglutamate synthase involved in arginine biosynthesis. This is Amino-acid acetyltransferase, mitochondrial (ARG2) from Kluyveromyces lactis (strain ATCC 8585 / CBS 2359 / DSM 70799 / NBRC 1267 / NRRL Y-1140 / WM37) (Yeast).